The chain runs to 232 residues: 5'-methylthioadenosine/S-adenosylhomocysteine nucleosidase (232 aa).

Glu12 (proton acceptor) is an active-site residue. Residues Gly78, Ile152, and 173 to 174 (ME) each bind substrate. Asp197 functions as the Proton donor in the catalytic mechanism.

Belongs to the PNP/UDP phosphorylase family. MtnN subfamily. As to quaternary structure, homodimer.

It catalyses the reaction S-adenosyl-L-homocysteine + H2O = S-(5-deoxy-D-ribos-5-yl)-L-homocysteine + adenine. The catalysed reaction is S-methyl-5'-thioadenosine + H2O = 5-(methylsulfanyl)-D-ribose + adenine. The enzyme catalyses 5'-deoxyadenosine + H2O = 5-deoxy-D-ribose + adenine. It functions in the pathway amino-acid biosynthesis; L-methionine biosynthesis via salvage pathway; S-methyl-5-thio-alpha-D-ribose 1-phosphate from S-methyl-5'-thioadenosine (hydrolase route): step 1/2. In terms of biological role, catalyzes the irreversible cleavage of the glycosidic bond in both 5'-methylthioadenosine (MTA) and S-adenosylhomocysteine (SAH/AdoHcy) to adenine and the corresponding thioribose, 5'-methylthioribose and S-ribosylhomocysteine, respectively. Also cleaves 5'-deoxyadenosine, a toxic by-product of radical S-adenosylmethionine (SAM) enzymes, into 5-deoxyribose and adenine. Thus, is required for in vivo function of the radical SAM enzymes biotin synthase and lipoic acid synthase, that are inhibited by 5'-deoxyadenosine accumulation. The polypeptide is 5'-methylthioadenosine/S-adenosylhomocysteine nucleosidase (Klebsiella pneumoniae subsp. pneumoniae (strain ATCC 700721 / MGH 78578)).